The chain runs to 120 residues: Large ribosomal subunit protein bL19 (120 aa).

The protein belongs to the bacterial ribosomal protein bL19 family.

Functionally, this protein is located at the 30S-50S ribosomal subunit interface and may play a role in the structure and function of the aminoacyl-tRNA binding site. The polypeptide is Large ribosomal subunit protein bL19 (Renibacterium salmoninarum (strain ATCC 33209 / DSM 20767 / JCM 11484 / NBRC 15589 / NCIMB 2235)).